A 527-amino-acid chain; its full sequence is Catalase (527 aa).

Basic and acidic residues predominate over residues 1-22 (MADSRDPASDQMKHWKEERAAQ). The tract at residues 1–32 (MADSRDPASDQMKHWKEERAAQKPDVLTTAGG) is disordered. An N-acetylalanine modification is found at Ala-2. Ser-9 is modified (phosphoserine). At Lys-13 the chain carries N6-succinyllysine. Catalysis depends on residues His-75 and Asn-148. Residues His-194, Ser-201, Arg-203, and Asn-213 each coordinate NADP(+). N6-succinyllysine is present on Lys-221. Lys-233 is modified (N6-acetyllysine). Positions 237, 303, 305, and 306 each coordinate NADP(+). Lys-306 carries the post-translational modification N6-acetyllysine; alternate. The residue at position 306 (Lys-306) is an N6-succinyllysine; alternate. Tyr-358 is a heme binding site. The residue at position 434 (Ser-434) is a Phosphoserine. An N6-acetyllysine; alternate modification is found at Lys-480. Lys-480 carries the N6-succinyllysine; alternate modification. Lys-499 carries the post-translational modification N6-acetyllysine. Residue Thr-511 is modified to Phosphothreonine. Phosphoserine is present on Ser-517. Lys-522 bears the N6-succinyllysine mark. The Microbody targeting signal; atypical signature appears at 524–527 (KANL).

This sequence belongs to the catalase family. As to quaternary structure, homotetramer. Interacts (via microbody targeting signal) with PEX5, monomeric form interacts with PEX5, leading to its translocation into peroxisomes. Heme serves as cofactor. Requires NADP(+) as cofactor.

It localises to the peroxisome matrix. It catalyses the reaction 2 H2O2 = O2 + 2 H2O. Catalyzes the degradation of hydrogen peroxide (H(2)O(2)) generated by peroxisomal oxidases to water and oxygen, thereby protecting cells from the toxic effects of hydrogen peroxide. Promotes growth of cells including T-cells, B-cells, myeloid leukemia cells, melanoma cells, mastocytoma cells and normal and transformed fibroblast cells. In Cavia porcellus (Guinea pig), this protein is Catalase (CAT).